The chain runs to 63 residues: DNA-directed RNA polymerase 7 kDa subunit (63 aa).

The protein belongs to the poxviridae DNA-directed RNA polymerase 7 kDa subunit family. In terms of assembly, the DNA-dependent RNA polymerase (vRNAP) consists of eight subunits encoded by early viral genes and termed according to their apparent molecular masses Rpo147, Rpo132, Rpo35, Rpo30, Rpo22, Rpo19, Rpo18, and Rpo7. The same holoenzyme, with the addition of the transcription-specificity factor RAP94, is used for early gene expression.

It is found in the virion. It catalyses the reaction RNA(n) + a ribonucleoside 5'-triphosphate = RNA(n+1) + diphosphate. In terms of biological role, part of the DNA-dependent RNA polymerase which catalyzes the transcription of viral DNA into RNA using the four ribonucleoside triphosphates as substrates. Responsible for the transcription of early, intermediate and late genes. DNA-dependent RNA polymerase associates with the early transcription factor (ETF), itself composed of OPG118 and OPG134, thereby allowing the early genes transcription. Late transcription, and probably also intermediate transcription, require newly synthesized RNA polymerase. The polypeptide is DNA-directed RNA polymerase 7 kDa subunit (OPG090) (Homo sapiens (Human)).